Reading from the N-terminus, the 588-residue chain is uncharacterized protein (588 aa).

7 helical membrane passes run 14 to 34 (FLLF…KGIV), 49 to 69 (AVIL…IVSA), 78 to 98 (IFLC…GILG), 184 to 204 (ALVV…LVAI), 235 to 255 (VPIA…AVIG), 257 to 274 (VISS…SYQE), and 275 to 292 (SSFY…SIYD). Ser-486 carries the post-translational modification Phosphoserine. The disordered stretch occupies residues 566-588 (RKGSVNGSDQESQKGVSRNVDIV). Positions 570-581 (VNGSDQESQKGV) are enriched in polar residues.

The protein localises to the membrane. This is an uncharacterized protein from Arabidopsis thaliana (Mouse-ear cress).